Reading from the N-terminus, the 763-residue chain is Exo-1,4-beta-xylosidase bxlB (763 aa).

A signal peptide spans 1–23 (MAVFKSWNLALLSSLFIPALCQS). N-linked (GlcNAc...) asparagine glycosylation is present at Asn63. Asp288 is a catalytic residue. Asn340, Asn408, Asn419, Asn458, Asn621, and Asn760 each carry an N-linked (GlcNAc...) asparagine glycan.

This sequence belongs to the glycosyl hydrolase 3 family.

Its subcellular location is the secreted. It carries out the reaction Hydrolysis of (1-&gt;4)-beta-D-xylans, to remove successive D-xylose residues from the non-reducing termini.. It functions in the pathway glycan degradation; xylan degradation. Xylan 1,4-beta-xylosidase involved in the hydrolysis of xylan, a major structural heterogeneous polysaccharide found in plant biomass representing the second most abundant polysaccharide in the biosphere, after cellulose. Active against rye arabinoxylan and xylohexaose, but not paranitrophenyl-beta-xyloside. This is Exo-1,4-beta-xylosidase bxlB (bxlB) from Emericella nidulans (strain FGSC A4 / ATCC 38163 / CBS 112.46 / NRRL 194 / M139) (Aspergillus nidulans).